The chain runs to 265 residues: Apolipoprotein A-I (265 aa).

The N-terminal stretch at 1–18 (MKAVLLTLAVLFLTGSQA) is a signal peptide. 2 repeat units span residues 67-88 (LKLL…EQLG) and 89-110 (PVTQ…QEMN). Residues 67 to 265 (LKLLDNWDSL…DEASKKLNAQ (199 aa)) form a 10 X approximate tandem repeats region. Methionine sulfoxide is present on Met109. The 3; half-length repeat unit spans residues 111–121 (KDLEEVKQKVQ). 5 repeat units span residues 122–142 (PYLD…RQKV), 144–165 (PLGE…DKLT), 166–187 (PLAE…QQLA), 188–209 (PYSD…AGGG), and 210–230 (SLAE…EKAK). Residues 231–241 (PALEDLRQGLV) form a 9; half-length repeat. Residues 242–265 (PVLESLKVSILAAIDEASKKLNAQ) form repeat 10.

It belongs to the apolipoprotein A1/A4/E family. Homodimer. Interacts with APOA1BP and CLU. Component of a sperm activating protein complex (SPAP), consisting of APOA1, an immunoglobulin heavy chain, an immunoglobulin light chain and albumin. Interacts with NDRG1. Interacts with SCGB3A2. Interacts with NAXE and YJEFN3. Post-translationally, glycosylated. Palmitoylated. In terms of processing, phosphorylation sites are present in the extracellular medium. In terms of tissue distribution, major protein of plasma HDL, also found in chylomicrons.

Its subcellular location is the secreted. Functionally, participates in the reverse transport of cholesterol from tissues to the liver for excretion by promoting cholesterol efflux from tissues and by acting as a cofactor for the lecithin cholesterol acyltransferase (LCAT). As part of the SPAP complex, activates spermatozoa motility. The sequence is that of Apolipoprotein A-I (APOA1) from Tursiops truncatus (Atlantic bottle-nosed dolphin).